The following is a 1358-amino-acid chain: Indole-3-acetaldehyde oxidase (1358 aa).

Residues 11 to 98 (STVVLAVNGK…RCSVTTSEGI (88 aa)) form the 2Fe-2S ferredoxin-type domain. Positions 50, 55, and 58 each coordinate [2Fe-2S] cluster. Residues 241–419 (IAASGDGWYH…LSIFIPEWGS (179 aa)) form the FAD-binding PCMH-type domain. The tract at residues 532 to 559 (SSAPSNIDTPNGSYTHETGSNVDSPERH) is disordered. Residues 537–554 (NIDTPNGSYTHETGSNVD) show a composition bias toward polar residues.

It belongs to the xanthine dehydrogenase family. In terms of assembly, aldehyde oxidases (AO) are homodimers and heterodimers of AO subunits. [2Fe-2S] cluster serves as cofactor. It depends on FAD as a cofactor. Requires Mo-molybdopterin as cofactor. In terms of tissue distribution, mostly expressed in roots, and, to a lower extent, in mesocotyl, leaves and coleoptile. Accumulates in apical region of maize coleoptiles (at protein level).

Its subcellular location is the cytoplasm. The catalysed reaction is indole-3-acetaldehyde + O2 + H2O = (indol-3-yl)acetate + H2O2 + H(+). With respect to regulation, inhibited by 2-mercaptoethanol, p-chloromercuribenzoate, and iodoacetate. In terms of biological role, in higher plants aldehyde oxidases (AO) appear to be homo- and heterodimeric assemblies of AO subunits with probably different physiological functions. Involved in the biosynthesis of auxin from (indol-3-yl)acetaldehyde. Can also use indole-3-aldehyde and benzaldehyde as substrate. The protein is Indole-3-acetaldehyde oxidase (AO1) of Zea mays (Maize).